Consider the following 125-residue polypeptide: Splicing factor 3B subunit 6 (125 aa).

Positions 16-29 (EVNRILYIRNLPYK) are interaction with pre-mRNA branch site. In terms of domain architecture, RRM spans 19 to 94 (RILYIRNLPY…RYLVVLYYNA (76 aa)). Lys29 carries the post-translational modification N6-acetyllysine; alternate. A Glycyl lysine isopeptide (Lys-Gly) (interchain with G-Cter in SUMO2); alternate cross-link involves residue Lys29. Lys41 is subject to N6-acetyllysine.

Component of the 17S U2 SnRNP complex, a ribonucleoprotein complex that contains small nuclear RNA (snRNA) U2 and a number of specific proteins. Part of the SF3B subcomplex of the 17S U2 SnRNP complex. SF3B associates with the splicing subcomplex SF3A and a 12S RNA unit to form the U2 small nuclear ribonucleoproteins complex (U2 snRNP). Within the SF3B complex interacts directly with SF3B1. Component of the minor spliceosome, which splices U12-type introns.

Its subcellular location is the nucleus. Its function is as follows. Component of the 17S U2 SnRNP complex of the spliceosome, a large ribonucleoprotein complex that removes introns from transcribed pre-mRNAs. The 17S U2 SnRNP complex (1) directly participates in early spliceosome assembly and (2) mediates recognition of the intron branch site during pre-mRNA splicing by promoting the selection of the pre-mRNA branch-site adenosine, the nucleophile for the first step of splicing. Within the 17S U2 SnRNP complex, SF3B6 is part of the SF3B subcomplex, which is required for 'A' complex assembly formed by the stable binding of U2 snRNP to the branchpoint sequence in pre-mRNA. Sequence independent binding of SF3A and SF3B subcomplexes upstream of the branch site is essential, it may anchor U2 snRNP to the pre-mRNA. Within the 17S U2 SnRNP complex, SF3B6 directly contacts the pre-mRNA branch site adenosine for the first catalytic step of splicing. SF3B6 stabilizes the intron branch site-U2 snRNA duplex, thereby promoting-binding of introns with poor sequence complementarity. Also acts as a component of the minor spliceosome, which is involved in the splicing of U12-type introns in pre-mRNAs. The polypeptide is Splicing factor 3B subunit 6 (Sf3b6) (Mus musculus (Mouse)).